The following is a 160-amino-acid chain: Ribosome maturation factor RimP (160 aa).

The protein belongs to the RimP family.

The protein localises to the cytoplasm. Functionally, required for maturation of 30S ribosomal subunits. This Geobacter sp. (strain M21) protein is Ribosome maturation factor RimP.